The primary structure comprises 324 residues: Glyoxylate/hydroxypyruvate reductase B (324 aa).

Residues arginine 237 and glutamate 266 contribute to the active site. Residue histidine 285 is the Proton donor of the active site.

Belongs to the D-isomer specific 2-hydroxyacid dehydrogenase family. GhrB subfamily. In terms of assembly, homodimer.

It is found in the cytoplasm. It carries out the reaction glycolate + NADP(+) = glyoxylate + NADPH + H(+). The enzyme catalyses (R)-glycerate + NAD(+) = 3-hydroxypyruvate + NADH + H(+). The catalysed reaction is (R)-glycerate + NADP(+) = 3-hydroxypyruvate + NADPH + H(+). Functionally, catalyzes the NADPH-dependent reduction of glyoxylate and hydroxypyruvate into glycolate and glycerate, respectively. The chain is Glyoxylate/hydroxypyruvate reductase B from Cronobacter sakazakii (strain ATCC BAA-894) (Enterobacter sakazakii).